Consider the following 309-residue polypeptide: Methionyl-tRNA formyltransferase (309 aa).

Residue 112 to 115 (SLLP) participates in (6S)-5,6,7,8-tetrahydrofolate binding.

This sequence belongs to the Fmt family.

It carries out the reaction L-methionyl-tRNA(fMet) + (6R)-10-formyltetrahydrofolate = N-formyl-L-methionyl-tRNA(fMet) + (6S)-5,6,7,8-tetrahydrofolate + H(+). In terms of biological role, attaches a formyl group to the free amino group of methionyl-tRNA(fMet). The formyl group appears to play a dual role in the initiator identity of N-formylmethionyl-tRNA by promoting its recognition by IF2 and preventing the misappropriation of this tRNA by the elongation apparatus. This chain is Methionyl-tRNA formyltransferase, found in Bartonella bacilliformis (strain ATCC 35685 / KC583 / Herrer 020/F12,63).